Here is an 85-residue protein sequence, read N- to C-terminus: U4-theraphotoxin-Hhn1c (85 aa).

An N-terminal signal peptide occupies residues Met-1 to Ala-22. Positions Glu-23–Arg-48 are excised as a propeptide. Intrachain disulfides connect Cys-52–Cys-66, Cys-56–Cys-77, and Cys-71–Cys-82.

This sequence belongs to the neurotoxin 12 (Hwtx-2) family. 02 (Hwtx-2) subfamily. As to expression, expressed by the venom gland.

It is found in the secreted. Functionally, postsynaptic neurotoxin. This chain is U4-theraphotoxin-Hhn1c, found in Cyriopagopus hainanus (Chinese bird spider).